We begin with the raw amino-acid sequence, 78 residues long: Alpha-neurotoxin homolog 1 (78 aa).

The N-terminal stretch at 1 to 21 is a signal peptide; the sequence is MKTLLLTLVVVTIVCLDFGYT. Disulfide bonds link C24-C42, C37-C57, C59-C70, and C71-C76.

Belongs to the three-finger toxin family. Short-chain subfamily. Orphan group XII sub-subfamily. As to expression, expressed by the venom gland.

The protein resides in the secreted. The polypeptide is Alpha-neurotoxin homolog 1 (Micrurus corallinus (Brazilian coral snake)).